Here is a 370-residue protein sequence, read N- to C-terminus: 4-hydroxy-3-methylbut-2-en-1-yl diphosphate synthase (flavodoxin) (370 aa).

Positions 270, 273, 305, and 312 each coordinate [4Fe-4S] cluster.

It belongs to the IspG family. It depends on [4Fe-4S] cluster as a cofactor.

It carries out the reaction (2E)-4-hydroxy-3-methylbut-2-enyl diphosphate + oxidized [flavodoxin] + H2O + 2 H(+) = 2-C-methyl-D-erythritol 2,4-cyclic diphosphate + reduced [flavodoxin]. It functions in the pathway isoprenoid biosynthesis; isopentenyl diphosphate biosynthesis via DXP pathway; isopentenyl diphosphate from 1-deoxy-D-xylulose 5-phosphate: step 5/6. In terms of biological role, converts 2C-methyl-D-erythritol 2,4-cyclodiphosphate (ME-2,4cPP) into 1-hydroxy-2-methyl-2-(E)-butenyl 4-diphosphate. In Ectopseudomonas mendocina (strain ymp) (Pseudomonas mendocina), this protein is 4-hydroxy-3-methylbut-2-en-1-yl diphosphate synthase (flavodoxin).